The primary structure comprises 200 residues: ATP synthase subunit s, mitochondrial (200 aa).

A mitochondrion-targeting transit peptide spans M1 to Y25. Positions M1–M61 are N-terminal domain. G59 contacts Mg(2+). LRR repeat units follow at residues V62–I87, Q88–L116, C117–L141, and E142–L173. T93 is a binding site for Mg(2+).

The protein belongs to the ATP synthase subunit s family. As to quaternary structure, homotetramer. Associates with ATP synthase.

It is found in the mitochondrion. Its subcellular location is the mitochondrion inner membrane. Involved in regulation of mitochondrial membrane ATP synthase. Necessary for H(+) conduction of ATP synthase. Facilitates energy-driven catalysis of ATP synthesis by blocking a proton leak through an alternative proton exit pathway. In Pongo abelii (Sumatran orangutan), this protein is ATP synthase subunit s, mitochondrial (DMAC2L).